Consider the following 112-residue polypeptide: 87 kDa annexin-binding protein (112 aa).

In terms of assembly, binds annexin.

The protein is 87 kDa annexin-binding protein of Physarum polycephalum (Slime mold).